The following is a 252-amino-acid chain: MAQQSLLDVQLVACSTFTTPSGVDWKVDSAATDSEALVEFAGRACYETFDKPNPRTAANDAYIRHIMEVGHMALLEHPTATVYIRGLSRSATHELVRHRHFSFSQLSQRFVHSDETHVVIPPLIDNDPQLRELFLSTVDEVRFAYSELMTALDNKLADEPNAILRRKQARQAARSILPNATESRIVVTGNFRAWRHFIGMRATEHADVEIRSLAVRCLEILKEKAPTVFSDFETSVLSDGSIMATSPYVTDY.

Residues 7-235 enclose the ThyX domain; that stretch reads LDVQLVACST…PTVFSDFETS (229 aa). Residues 94–97, 105–109, and Arg174 each bind dUMP; these read ELVR and QLSQR. FAD is bound by residues 97-99 and Gln105; that span reads RHR. The short motif at 97 to 107 is the ThyX motif element; that stretch reads RHRHFSFSQLS. FAD is bound by residues 190-192 and His196; that span reads NFR. Residue Arg201 participates in dUMP binding. Arg201 (involved in ionization of N3 of dUMP, leading to its activation) is an active-site residue.

This sequence belongs to the thymidylate synthase ThyX family. Homotetramer. FAD is required as a cofactor.

The enzyme catalyses dUMP + (6R)-5,10-methylene-5,6,7,8-tetrahydrofolate + NADPH + H(+) = dTMP + (6S)-5,6,7,8-tetrahydrofolate + NADP(+). Its pathway is pyrimidine metabolism; dTTP biosynthesis. In terms of biological role, catalyzes the reductive methylation of 2'-deoxyuridine-5'-monophosphate (dUMP) to 2'-deoxythymidine-5'-monophosphate (dTMP) while utilizing 5,10-methylenetetrahydrofolate (mTHF) as the methyl donor, and NADPH and FADH(2) as the reductant. The sequence is that of Flavin-dependent thymidylate synthase from Corynebacterium diphtheriae (strain ATCC 700971 / NCTC 13129 / Biotype gravis).